Consider the following 236-residue polypeptide: Rho-related GTP-binding protein RhoV (236 aa).

The interval 1-27 (MPPRELSEAESSPLRSPTPPPGRGSAS) is disordered. Serine 25 carries the post-translational modification Phosphoserine. Residues 38 to 45 (GDGAVGKS), 85 to 89 (DTAGQ), and 143 to 146 (TQAD) contribute to the GTP site. Cysteine 234 carries the S-palmitoyl cysteine lipid modification.

The protein belongs to the small GTPase superfamily. Rho family. As to quaternary structure, interacts with PAK2. Requires Mg(2+) as cofactor.

It localises to the cell membrane. The protein resides in the endosome membrane. In terms of biological role, plays a role in the control of the actin cytoskeleton via activation of the JNK pathway. In Bos taurus (Bovine), this protein is Rho-related GTP-binding protein RhoV.